The primary structure comprises 409 residues: uncharacterized protein (409 aa).

Positions 36 to 50 (HLKAKARAQESDSDR) are enriched in basic and acidic residues. Disordered stretches follow at residues 36–67 (HLKAKARAQESDSDRPCSSIESSSEPASTFSS), 239–298 (IENT…SSTI), and 338–373 (RSQIKGKDSEGRRKIQRRHKKPLAEEEADPTLTGPR). Positions 51–67 (PCSSIESSSEPASTFSS) are enriched in low complexity. Residues 245–265 (VREESNQEHPPGKQEKTEKHP) are compositionally biased toward basic and acidic residues. A compositionally biased stretch (polar residues) spans 268–281 (LQGSHQAEPETSSK). Basic and acidic residues-rich tracts occupy residues 282–294 (NSEEYEKSLKMDD) and 338–350 (RSQIKGKDSEGRR).

This is an uncharacterized protein from Homo sapiens (Human).